The sequence spans 385 residues: Initiation-specific alpha-1,6-mannosyltransferase (385 aa).

At 1 to 15 (MLQLREPQMVHKHLK) the chain is on the cytoplasmic side. A helical; Signal-anchor for type II membrane protein membrane pass occupies residues 16–36 (LAVLGIVVIFTTYFIISSLSS). At 37-385 (PTSTHKTEYN…KDDGMPEMEQ (349 aa)) the chain is on the lumenal side. The DXD motif motif lies at 189 to 191 (DID).

This sequence belongs to the glycosyltransferase 32 family. Mn(2+) serves as cofactor.

The protein resides in the endoplasmic reticulum membrane. It localises to the golgi apparatus membrane. It catalyses the reaction Transfers an alpha-D-mannosyl residue from GDP-mannose into lipid-linked oligosaccharide, forming an alpha-(1-&gt;6)-D-mannosyl-D-mannose linkage.. In terms of biological role, mannosyltransferase involved in outer chain elongation of asparagine-linked oligosaccharides of the type Man(9)GlcNAc(2). Adds the first alpha-1,6-mannose to the Man(8)GlcNAc(2) and Man(9)GlcNAc(2), but not Man(5)GlcNAc(2), endoplasmic reticulum intermediates. Represents the first enzymatic event required for synthesis of outer chain mannose linkages on yeast secretory proteins. N-glycan outer chain epitopes play a crucial role in the host-fungal interaction, virulence, and host immune response such as interleukin synthesis or phagocytosis by neutrophils. This is Initiation-specific alpha-1,6-mannosyltransferase from Candida albicans (strain SC5314 / ATCC MYA-2876) (Yeast).